A 232-amino-acid chain; its full sequence is 2-C-methyl-D-erythritol 4-phosphate cytidylyltransferase (232 aa).

This sequence belongs to the IspD/TarI cytidylyltransferase family. IspD subfamily.

It carries out the reaction 2-C-methyl-D-erythritol 4-phosphate + CTP + H(+) = 4-CDP-2-C-methyl-D-erythritol + diphosphate. Its pathway is isoprenoid biosynthesis; isopentenyl diphosphate biosynthesis via DXP pathway; isopentenyl diphosphate from 1-deoxy-D-xylulose 5-phosphate: step 2/6. Its function is as follows. Catalyzes the formation of 4-diphosphocytidyl-2-C-methyl-D-erythritol from CTP and 2-C-methyl-D-erythritol 4-phosphate (MEP). The sequence is that of 2-C-methyl-D-erythritol 4-phosphate cytidylyltransferase from Synechococcus sp. (strain ATCC 27144 / PCC 6301 / SAUG 1402/1) (Anacystis nidulans).